A 124-amino-acid polypeptide reads, in one-letter code: Small ribosomal subunit protein uS12 (124 aa).

The interval 1-25 (MPTINQLIRKPRKSQKEKTASPALQ) is disordered. Position 89 is a 3-methylthioaspartic acid (Asp-89).

This sequence belongs to the universal ribosomal protein uS12 family. As to quaternary structure, part of the 30S ribosomal subunit. Contacts proteins S8 and S17. May interact with IF1 in the 30S initiation complex.

In terms of biological role, with S4 and S5 plays an important role in translational accuracy. Functionally, interacts with and stabilizes bases of the 16S rRNA that are involved in tRNA selection in the A site and with the mRNA backbone. Located at the interface of the 30S and 50S subunits, it traverses the body of the 30S subunit contacting proteins on the other side and probably holding the rRNA structure together. The combined cluster of proteins S8, S12 and S17 appears to hold together the shoulder and platform of the 30S subunit. In Borrelia duttonii (strain Ly), this protein is Small ribosomal subunit protein uS12.